Reading from the N-terminus, the 30-residue chain is Snaclec carinactivase-1 regulatory subunit 14 kDa chain (30 aa).

One can recognise a C-type lectin domain in the interval 1–30; that stretch reads DCLPDWFHYEGHCYRVFDEPKKWADAEKFC. An intrachain disulfide couples C2 to C13.

Belongs to the snaclec family. In terms of assembly, heterodimer of a metalloproteinase subunit and a regulatory subunit comprising two polypeptides disulfide-linked (14 kDa and 17 kDa chains). In terms of tissue distribution, expressed by the venom gland.

It is found in the secreted. Its function is as follows. Calcium-dependent prothrombin activator. This protein may activate prothrombin via recognition by the regulatory subunit of the calcium ion bound conformation of its gamma-carboxyglutamic acid (GLA) domain, and the subsequent conversion of prothrombin to active thrombin is catalyzed by the catalytic subunit. The polypeptide is Snaclec carinactivase-1 regulatory subunit 14 kDa chain (Echis carinatus (Saw-scaled viper)).